Reading from the N-terminus, the 129-residue chain is Small ribosomal subunit protein uS11 (129 aa).

Belongs to the universal ribosomal protein uS11 family. In terms of assembly, part of the 30S ribosomal subunit. Interacts with proteins S7 and S18. Binds to IF-3.

Located on the platform of the 30S subunit, it bridges several disparate RNA helices of the 16S rRNA. Forms part of the Shine-Dalgarno cleft in the 70S ribosome. The protein is Small ribosomal subunit protein uS11 of Synechococcus sp. (strain RCC307).